The primary structure comprises 398 residues: Heat-inducible transcription repressor HrcA (398 aa).

The protein belongs to the HrcA family.

In terms of biological role, negative regulator of class I heat shock genes (grpE-dnaK-dnaJ and groELS operons). Prevents heat-shock induction of these operons. The polypeptide is Heat-inducible transcription repressor HrcA (Chlamydia pneumoniae (Chlamydophila pneumoniae)).